The chain runs to 315 residues: tRNA dimethylallyltransferase (315 aa).

ATP is bound at residue 10-17; that stretch reads GPTGVGKT. 12–17 serves as a coordination point for substrate; it reads TGVGKT. The segment at 35–38 is interaction with substrate tRNA; it reads DSMQ.

This sequence belongs to the IPP transferase family. Monomer. Requires Mg(2+) as cofactor.

The catalysed reaction is adenosine(37) in tRNA + dimethylallyl diphosphate = N(6)-dimethylallyladenosine(37) in tRNA + diphosphate. Functionally, catalyzes the transfer of a dimethylallyl group onto the adenine at position 37 in tRNAs that read codons beginning with uridine, leading to the formation of N6-(dimethylallyl)adenosine (i(6)A). The sequence is that of tRNA dimethylallyltransferase from Thermodesulfovibrio yellowstonii (strain ATCC 51303 / DSM 11347 / YP87).